The following is a 94-amino-acid chain: MAKEELIQFEGLVTEILPDARYRVQLDAGHEIVAYTAGKMKKNRIKTLAGDRVTIEMSPYDLEKGRLIFRHKDERPGGTGAPRSGPPRGQFRRR.

The S1-like domain occupies 1-72 (MAKEELIQFE…EKGRLIFRHK (72 aa)). The disordered stretch occupies residues 71–94 (HKDERPGGTGAPRSGPPRGQFRRR).

Belongs to the IF-1 family. Component of the 30S ribosomal translation pre-initiation complex which assembles on the 30S ribosome in the order IF-2 and IF-3, IF-1 and N-formylmethionyl-tRNA(fMet); mRNA recruitment can occur at any time during PIC assembly.

The protein localises to the cytoplasm. Its function is as follows. One of the essential components for the initiation of protein synthesis. Stabilizes the binding of IF-2 and IF-3 on the 30S subunit to which N-formylmethionyl-tRNA(fMet) subsequently binds. Helps modulate mRNA selection, yielding the 30S pre-initiation complex (PIC). Upon addition of the 50S ribosomal subunit IF-1, IF-2 and IF-3 are released leaving the mature 70S translation initiation complex. This is Translation initiation factor IF-1 from Rhodopseudomonas palustris (strain HaA2).